We begin with the raw amino-acid sequence, 338 residues long: UPF0104 membrane protein MTH_1261 (338 aa).

A run of 8 helical transmembrane segments spans residues 6 to 26, 36 to 56, 124 to 144, 149 to 169, 231 to 251, 254 to 274, 275 to 295, and 310 to 330; these read AILI…IGPG, DPVY…LFTL, LDTF…VLYF, WILA…FLAL, ISFL…TAFG, ISLL…MIPL, LPGG…YAGV, and ISFW…GSSV.

This sequence belongs to the UPF0104 family.

The protein localises to the cell membrane. This is UPF0104 membrane protein MTH_1261 from Methanothermobacter thermautotrophicus (strain ATCC 29096 / DSM 1053 / JCM 10044 / NBRC 100330 / Delta H) (Methanobacterium thermoautotrophicum).